We begin with the raw amino-acid sequence, 450 residues long: MFS-type transporter avaK (450 aa).

8 helical membrane passes run 18 to 38 (VMAL…LSMP), 100 to 120 (RVVC…SGLL), 148 to 168 (AVAL…AAPA), 171 to 191 (ALVA…MLFV), 244 to 264 (APII…HFLL), 280 to 300 (LVLV…MPAA), 329 to 349 (FGFF…ALAF), and 408 to 428 (GWLG…LVAV).

It belongs to the major facilitator superfamily.

Its subcellular location is the membrane. It functions in the pathway secondary metabolite biosynthesis. MFS-type transporter; part of the cluster that mediates the biosynthesis of a highly modified cyclo-arginine-tryptophan dipeptide (cRW). The chain is MFS-type transporter avaK from Aspergillus versicolor.